Consider the following 694-residue polypeptide: Ribonuclease R (694 aa).

The region spanning 204–525 (RKDLRDLLCF…IVHRLLFHPL (322 aa)) is the RNB domain. The S1 motif domain maps to 571–648 (ATLYKAFIIT…LTQSIEWTLV (78 aa)). Residues 652-694 (TKAKAKRTSKKKKTESVTTKEKKKSPAKKKKGATKTKKGSGKN) are disordered. Composition is skewed to basic residues over residues 654 to 664 (AKAKRTSKKKK) and 672 to 694 (EKKK…SGKN).

This sequence belongs to the RNR ribonuclease family. RNase R subfamily.

It is found in the cytoplasm. The enzyme catalyses Exonucleolytic cleavage in the 3'- to 5'-direction to yield nucleoside 5'-phosphates.. In terms of biological role, 3'-5' exoribonuclease that releases 5'-nucleoside monophosphates and is involved in maturation of structured RNAs. This Chlamydia trachomatis serovar D (strain ATCC VR-885 / DSM 19411 / UW-3/Cx) protein is Ribonuclease R.